A 184-amino-acid polypeptide reads, in one-letter code: Phosducin-like protein 3 (184 aa).

Residues 45–184 are thioredoxin fold; it reads HGELKEIDEQ…VKNNKFKEDD (140 aa).

The protein belongs to the phosducin family.

The sequence is that of Phosducin-like protein 3 (phlp3) from Dictyostelium discoideum (Social amoeba).